Consider the following 331-residue polypeptide: MKPKVFITRQIPENGIKMIEKFYEIELWKDPKAPPRGVLLEKVREVDALVTLVTDKVDKELLENAPKLKIIAQYAVGYDNIDIEEATKRGIYVTNTPGVLTDATADLAFALLLAVARRIVEADAFVRSGEWKKSEVGWHPLMFLGYGLKGKTLGIVGFGRIGQALAKRAKGFGMKIIYYSRTRKPEAEEEIGAEYVDFETLLKESDFISLHVPLTKETYHMIGEKELKLMKPNAILINTSRGAVVDTNALIKALKEGWIAGAGLDVFEEEPYYNEELFKLKNVVLAPHIGSATHEAREGMAELVAKNLIAFAKGEIPPNLVNKDVLTSSPP.

NADP(+) contacts are provided by residues 158–161 (FGRI), 180–182 (SRT), and 239–241 (TSR). Active-site residues include Arg241 and Glu270. The active-site Proton donor is His288. 288 to 290 (HIG) contacts NADP(+).

This sequence belongs to the D-isomer specific 2-hydroxyacid dehydrogenase family. GyaR subfamily. Homodimer.

It localises to the cytoplasm. It carries out the reaction glycolate + NAD(+) = glyoxylate + NADH + H(+). This chain is Glyoxylate reductase, found in Thermococcus litoralis (strain ATCC 51850 / DSM 5473 / JCM 8560 / NS-C).